A 36-amino-acid polypeptide reads, in one-letter code: U4-ctenitoxin-Pr1a (36 aa).

3 cysteine pairs are disulfide-bonded: C3–C17, C10–C22, and C16–C34.

As to expression, expressed by the venom gland.

It localises to the secreted. In terms of biological role, neurotoxin. Causes spastic paralysis and death in mice. Moderate inhibitor of L-type calcium channels (Cav1/CACNA1). This Phoneutria reidyi (Brazilian Amazonian armed spider) protein is U4-ctenitoxin-Pr1a.